We begin with the raw amino-acid sequence, 230 residues long: Type II restriction enzyme SinI (230 aa).

The catalysed reaction is Endonucleolytic cleavage of DNA to give specific double-stranded fragments with terminal 5'-phosphates.. Its function is as follows. A P subtype restriction enzyme that recognizes the double-stranded sequence 5'-GGWCC-3' and cleaves after G-1. The chain is Type II restriction enzyme SinI (sinIR) from Salmonella infantis.